The following is a 196-amino-acid chain: Transcription repressor OFP10 (196 aa).

Positions methionine 100–histidine 159 constitute an OVATE domain.

As to expression, expressed in roots, cauline leaves, shoots, stems, flower buds and siliques.

Its subcellular location is the nucleus. Functionally, transcriptional repressor that may regulate multiple aspects of plant growth and development through the regulation of BEL1-LIKE (BLH) and KNOX TALE (KNAT) homeodomain transcription factors. The chain is Transcription repressor OFP10 (OFP10) from Arabidopsis thaliana (Mouse-ear cress).